The following is a 420-amino-acid chain: D-tagatose-1,6-bisphosphate aldolase subunit GatZ (420 aa).

This sequence belongs to the GatZ/KbaZ family. GatZ subfamily. As to quaternary structure, forms a complex with GatY.

It participates in carbohydrate metabolism; D-tagatose 6-phosphate degradation; D-glyceraldehyde 3-phosphate and glycerone phosphate from D-tagatose 6-phosphate: step 2/2. In terms of biological role, component of the tagatose-1,6-bisphosphate aldolase GatYZ that is required for full activity and stability of the Y subunit. Could have a chaperone-like function for the proper and stable folding of GatY. When expressed alone, GatZ does not show any aldolase activity. Is involved in the catabolism of galactitol. The sequence is that of D-tagatose-1,6-bisphosphate aldolase subunit GatZ from Escherichia coli (strain SMS-3-5 / SECEC).